The sequence spans 330 residues: Aspartate--ammonia ligase (330 aa).

Belongs to the class-II aminoacyl-tRNA synthetase family. AsnA subfamily.

The protein resides in the cytoplasm. The catalysed reaction is L-aspartate + NH4(+) + ATP = L-asparagine + AMP + diphosphate + H(+). Its pathway is amino-acid biosynthesis; L-asparagine biosynthesis; L-asparagine from L-aspartate (ammonia route): step 1/1. The chain is Aspartate--ammonia ligase from Haemophilus influenzae (strain PittEE).